Consider the following 214-residue polypeptide: Probable nicotinate-nucleotide adenylyltransferase (214 aa).

This sequence belongs to the NadD family.

It catalyses the reaction nicotinate beta-D-ribonucleotide + ATP + H(+) = deamido-NAD(+) + diphosphate. The protein operates within cofactor biosynthesis; NAD(+) biosynthesis; deamido-NAD(+) from nicotinate D-ribonucleotide: step 1/1. Functionally, catalyzes the reversible adenylation of nicotinate mononucleotide (NaMN) to nicotinic acid adenine dinucleotide (NaAD). This chain is Probable nicotinate-nucleotide adenylyltransferase, found in Pseudomonas fluorescens (strain ATCC BAA-477 / NRRL B-23932 / Pf-5).